A 325-amino-acid polypeptide reads, in one-letter code: tRNA N6-adenosine threonylcarbamoyltransferase (325 aa).

Fe cation contacts are provided by His-107 and His-111. Residues 129–133 (LVSGG), Asp-162, Gly-175, and Asn-265 contribute to the substrate site. Fe cation is bound at residue Asp-293.

The protein belongs to the KAE1 / TsaD family. Requires Fe(2+) as cofactor.

The protein localises to the cytoplasm. It catalyses the reaction L-threonylcarbamoyladenylate + adenosine(37) in tRNA = N(6)-L-threonylcarbamoyladenosine(37) in tRNA + AMP + H(+). Functionally, required for the formation of a threonylcarbamoyl group on adenosine at position 37 (t(6)A37) in tRNAs that read codons beginning with adenine. Is involved in the transfer of the threonylcarbamoyl moiety of threonylcarbamoyl-AMP (TC-AMP) to the N6 group of A37, together with TsaE and TsaB. TsaD likely plays a direct catalytic role in this reaction. The chain is tRNA N6-adenosine threonylcarbamoyltransferase from Sulfurimonas denitrificans (strain ATCC 33889 / DSM 1251) (Thiomicrospira denitrificans (strain ATCC 33889 / DSM 1251)).